Here is a 387-residue protein sequence, read N- to C-terminus: 3-ketoacyl-CoA thiolase (387 aa).

Cysteine 91 acts as the Acyl-thioester intermediate in catalysis. Residues histidine 343 and cysteine 373 each act as proton acceptor in the active site.

The protein belongs to the thiolase-like superfamily. Thiolase family. As to quaternary structure, heterotetramer of two alpha chains (FadB) and two beta chains (FadA).

The protein resides in the cytoplasm. The catalysed reaction is an acyl-CoA + acetyl-CoA = a 3-oxoacyl-CoA + CoA. Its pathway is lipid metabolism; fatty acid beta-oxidation. Its function is as follows. Catalyzes the final step of fatty acid oxidation in which acetyl-CoA is released and the CoA ester of a fatty acid two carbons shorter is formed. The sequence is that of 3-ketoacyl-CoA thiolase from Enterobacter sp. (strain 638).